Consider the following 314-residue polypeptide: Quinolinate synthase (314 aa).

Iminosuccinate-binding residues include His-27 and Ser-44. Cys-89 lines the [4Fe-4S] cluster pocket. Residues 115–117 (YIN) and Ser-132 each bind iminosuccinate. Cys-175 contributes to the [4Fe-4S] cluster binding site. Iminosuccinate-binding positions include 201-203 (HPE) and Thr-218. Cys-271 is a binding site for [4Fe-4S] cluster.

This sequence belongs to the quinolinate synthase family. Type 2 subfamily. It depends on [4Fe-4S] cluster as a cofactor.

It localises to the cytoplasm. The catalysed reaction is iminosuccinate + dihydroxyacetone phosphate = quinolinate + phosphate + 2 H2O + H(+). Its pathway is cofactor biosynthesis; NAD(+) biosynthesis; quinolinate from iminoaspartate: step 1/1. Functionally, catalyzes the condensation of iminoaspartate with dihydroxyacetone phosphate to form quinolinate. In Ehrlichia chaffeensis (strain ATCC CRL-10679 / Arkansas), this protein is Quinolinate synthase.